The sequence spans 711 residues: Pentatricopeptide repeat-containing protein At5g46580, chloroplastic (711 aa).

Residues 1–43 (MATVLTTAIDVCFNPQNSDTKKHSLFLKPSLFRQSRSRKLNIS) constitute a chloroplast transit peptide. PPR repeat units follow at residues 185–219 (ETIF…GVEL), 220–254 (DNIT…GLMP), 255–289 (DEVT…GWKP), 290–324 (DAIA…DVKP), 325–359 (NVVV…GLTP), 360–394 (NEKT…KWPM), 395–425 (DFIL…MKES), 431–465 (DNFS…GVQV), 466–500 (NVMG…GVKP), and 501–535 (DDRL…NKKL). In terms of domain architecture, Smr spans 614 to 696 (LDVRSLSVGA…IFVATKEDLV (83 aa)).

Belongs to the PPR family. P subfamily.

It is found in the plastid. The protein localises to the chloroplast. This Arabidopsis thaliana (Mouse-ear cress) protein is Pentatricopeptide repeat-containing protein At5g46580, chloroplastic.